We begin with the raw amino-acid sequence, 504 residues long: uncharacterized protein (504 aa).

The disordered stretch occupies residues 431–483; sequence GEAEKYRKLQDGDEDEEGTGKPEPKKARRKGFGGKFAPKHEEKVTRAVGVNSE.

The protein belongs to the CBF/MAK21 family.

This is an uncharacterized protein from Caenorhabditis elegans.